The sequence spans 391 residues: Mannonate dehydratase (391 aa).

Belongs to the mannonate dehydratase family. Fe(2+) is required as a cofactor. It depends on Mn(2+) as a cofactor.

It carries out the reaction D-mannonate = 2-dehydro-3-deoxy-D-gluconate + H2O. The protein operates within carbohydrate metabolism; pentose and glucuronate interconversion. Catalyzes the dehydration of D-mannonate. This Marinomonas sp. (strain MWYL1) protein is Mannonate dehydratase.